Consider the following 180-residue polypeptide: Oligoribonuclease (180 aa).

The Exonuclease domain occupies 7 to 168; that stretch reads LVWIDLEMTG…QDIRDSIDEL (162 aa). Y128 is an active-site residue.

Belongs to the oligoribonuclease family.

Its subcellular location is the cytoplasm. Its function is as follows. 3'-to-5' exoribonuclease specific for small oligoribonucleotides. In Dichelobacter nodosus (strain VCS1703A), this protein is Oligoribonuclease.